The primary structure comprises 334 residues: Protein CapI (334 aa).

Ser126 lines the substrate pocket. Tyr151 serves as the catalytic Proton acceptor.

The protein belongs to the NAD(P)-dependent epimerase/dehydratase family.

It functions in the pathway capsule biogenesis; capsule polysaccharide biosynthesis. Functionally, required for the biosynthesis of type 1 capsular polysaccharide. The chain is Protein CapI (capI) from Staphylococcus aureus.